The chain runs to 479 residues: Ribosomal RNA small subunit methyltransferase F (479 aa).

Residues 125–131 (AAAPGSK), glutamate 149, aspartate 176, and aspartate 194 each bind S-adenosyl-L-methionine. The active-site Nucleophile is the cysteine 247.

It belongs to the class I-like SAM-binding methyltransferase superfamily. RsmB/NOP family.

It is found in the cytoplasm. It catalyses the reaction cytidine(1407) in 16S rRNA + S-adenosyl-L-methionine = 5-methylcytidine(1407) in 16S rRNA + S-adenosyl-L-homocysteine + H(+). Specifically methylates the cytosine at position 1407 (m5C1407) of 16S rRNA. This is Ribosomal RNA small subunit methyltransferase F from Salmonella newport (strain SL254).